A 341-amino-acid polypeptide reads, in one-letter code: Two-component response regulator EHD1 (341 aa).

Residues 12–127 (RVLVIDDDCS…ELSNIWQHIF (116 aa)) enclose the Response regulatory domain. D63 is modified (4-aspartylphosphate). Residues 195-254 (DLGKSRLTWTTQLHRQFIAAVNHLGEDKAVPKKILGIMKVKHLTREQVASHLQKYRMQLK) form the HTH myb-type domain. Positions 225-250 (PKKILGIMKVKHLTREQVASHLQKYR) form a DNA-binding region, H-T-H motif.

Post-translationally, two-component system major event consists of a His-to-Asp phosphorelay between a sensor histidine kinase (HK) and a response regulator (RR). In plants, the His-to-Asp phosphorelay involves an additional intermediate named Histidine-containing phosphotransfer protein (HPt). This multistep phosphorelay consists of a His-Asp-His-Asp sequential transfer of a phosphate group between first a His and an Asp of the HK protein, followed by the transfer to a conserved His of the HPt protein and finally the transfer to an Asp in the receiver domain of the RR protein.

The protein localises to the nucleus. Transcriptional activator that acts as a floral inducer to promote short-day (SD) flowering pathway. Activates Hd3a and other FT-like genes independently from Hd1. May also activate MADS-box transcription factors involved in flowering regulation. This is Two-component response regulator EHD1 (EHD1) from Oryza sativa subsp. indica (Rice).